We begin with the raw amino-acid sequence, 138 residues long: Putative nickel-responsive regulator (138 aa).

H78, H89, H91, and C97 together coordinate Ni(2+).

It belongs to the transcriptional regulatory CopG/NikR family. Ni(2+) is required as a cofactor.

In terms of biological role, transcriptional regulator. This chain is Putative nickel-responsive regulator, found in Pyrococcus abyssi (strain GE5 / Orsay).